The chain runs to 549 residues: Lipase 3 (549 aa).

The signal sequence occupies residues 1–15; sequence MKLALALSLIASVAA. Cysteines 75 and 112 form a disulfide. S224 (acyl-ester intermediate) is an active-site residue. C283 and C292 form a disulfide bridge. N329 carries N-linked (GlcNAc...) asparagine glycosylation. Catalysis depends on E356, which acts as the Charge relay system. An N-linked (GlcNAc...) asparagine glycan is attached at N366. The Charge relay system role is filled by H464.

Belongs to the type-B carboxylesterase/lipase family. As to quaternary structure, monomer and homodimer.

It carries out the reaction a triacylglycerol + H2O = a diacylglycerol + a fatty acid + H(+). This Diutina rugosa (Yeast) protein is Lipase 3 (LIP3).